Here is a 147-residue protein sequence, read N- to C-terminus: Hemoglobin subunit beta-1 (147 aa).

V2 is subject to N-acetylvaline. The region spanning 3–147 (HLTDAEKAAV…VATALAHKYH (145 aa)) is the Globin domain. K18 bears the N6-succinyllysine mark. Residues S21, S45, and S51 each carry the phosphoserine modification. Residue K60 is modified to N6-succinyllysine. Heme b contacts are provided by H64 and H93. R105 is subject to Asymmetric dimethylarginine. T124 bears the Phosphothreonine mark.

Belongs to the globin family. As to quaternary structure, heterotetramer of two alpha chains and two beta chains. As to expression, red blood cells.

Functionally, involved in oxygen transport from the lung to the various peripheral tissues. The polypeptide is Hemoglobin subunit beta-1 (Hbb-b1) (Mus musculus (Mouse)).